Consider the following 129-residue polypeptide: uncharacterized protein (129 aa).

The disordered stretch occupies residues 23–101 (KASTSSESCQ…TAATRTTSKK (79 aa)). 2 stretches are compositionally biased toward basic and acidic residues: residues 31 to 40 (CQRRGVRDDT) and 67 to 80 (EGDR…EKEP).

This is an uncharacterized protein from Ictaluridae (bullhead catfishes).